The chain runs to 451 residues: Vitamin D3 receptor (451 aa).

Positions 44-112 form a DNA-binding region, nuclear receptor; that stretch reads PRICGVCGDR…RLKRCVDIGM (69 aa). Zn(2+) contacts are provided by Cys47, Cys50, Cys64, Cys67, Cys83, Cys89, Cys99, and Cys102. NR C4-type zinc fingers lie at residues 47 to 67 and 83 to 107; these read CGVCGDRATGFHFNAMTCEGC and CPFNGDCKITKDNRRHCQACRLKRC. Hinge stretches follow at residues 113–149 and 120–149; these read MKEFILTDEEVQRKREMILKRKEEEALKESLKPKLSE and DEEVQRKREMILKRKEEEALKESLKPKLSE. The NR LBD domain occupies 150–447; the sequence is EQQKVIDTLL…LTPLVLEVFG (298 aa). A calcitriol-binding site is contributed by Ser261. The interaction with coactivator LXXLL motif stretch occupies residues 270-288; that stretch reads KMIPGFRDLTAEDQIALLK. Calcitriol contacts are provided by Arg298, Ser302, His329, and His421. The 9aaTAD motif lies at 440-448; the sequence is PLVLEVFGN.

This sequence belongs to the nuclear hormone receptor family. NR1 subfamily. Homodimer in the absence of bound vitamin D3. Heterodimer with RXRA after vitamin D3 binding. Expressed in kidney and intestine.

The protein resides in the nucleus. It localises to the cytoplasm. Its function is as follows. Nuclear receptor for calcitriol, the active form of vitamin D3 which mediates the action of this vitamin on cells. Enters the nucleus upon vitamin D3 binding where it forms heterodimers with the retinoid X receptor/RXR. The VDR-RXR heterodimers bind to specific response elements on DNA and activate the transcription of vitamin D3-responsive target genes. Plays a central role in calcium homeostasis. Also functions as a receptor for the secondary bile acid lithocholic acid (LCA) and its metabolites. In Gallus gallus (Chicken), this protein is Vitamin D3 receptor (VDR).